Reading from the N-terminus, the 85-residue chain is Probable Thioredoxin (85 aa).

A Glutaredoxin domain is found at 2–85 (VVKIEVFTSP…LFEAISDEIE (84 aa)). A disulfide bridge connects residues cysteine 13 and cysteine 16.

It belongs to the glutaredoxin family.

The protein resides in the cytoplasm. Its function is as follows. Does not function as a glutathione-disulfide oxidoreductase in the presence of glutathione and glutathione reductase. May be a component of a ribonucleotide-reducing system distinct from the previously described systems utilizing thioredoxin or glutaredoxin. The chain is Probable Thioredoxin from Methanothermobacter marburgensis (strain ATCC BAA-927 / DSM 2133 / JCM 14651 / NBRC 100331 / OCM 82 / Marburg) (Methanobacterium thermoautotrophicum).